Here is a 311-residue protein sequence, read N- to C-terminus: Protoheme IX farnesyltransferase (311 aa).

9 helical membrane-spanning segments follow: residues 32–52 (VMSL…VPIN), 53–73 (PWYG…AGAL), 104–124 (FIFG…FINW), 125–145 (FAAF…TIWL), 153–173 (IVIG…VTTG), 180–200 (FLLF…LSLF), 224–244 (KQIL…CFTG), 245–265 (LGGV…IYFA), and 285–305 (FFFS…ESLV).

It belongs to the UbiA prenyltransferase family. Protoheme IX farnesyltransferase subfamily.

The protein localises to the cell inner membrane. It carries out the reaction heme b + (2E,6E)-farnesyl diphosphate + H2O = Fe(II)-heme o + diphosphate. It functions in the pathway porphyrin-containing compound metabolism; heme O biosynthesis; heme O from protoheme: step 1/1. In terms of biological role, converts heme B (protoheme IX) to heme O by substitution of the vinyl group on carbon 2 of heme B porphyrin ring with a hydroxyethyl farnesyl side group. This is Protoheme IX farnesyltransferase from Bartonella tribocorum (strain CIP 105476 / IBS 506).